A 138-amino-acid chain; its full sequence is Large ribosomal subunit protein uL16 (138 aa).

The span at 1-13 shows a compositional bias: basic residues; sequence MLQPARRKFRKEQ. A disordered region spans residues 1-22; it reads MLQPARRKFRKEQKGRNTGLAT.

It belongs to the universal ribosomal protein uL16 family. As to quaternary structure, part of the 50S ribosomal subunit.

Its function is as follows. Binds 23S rRNA and is also seen to make contacts with the A and possibly P site tRNAs. The protein is Large ribosomal subunit protein uL16 of Thiobacillus denitrificans (strain ATCC 25259 / T1).